The sequence spans 446 residues: UDP-N-acetylmuramoylalanine--D-glutamate ligase (446 aa).

118 to 124 (GSNGKST) lines the ATP pocket.

The protein belongs to the MurCDEF family.

It is found in the cytoplasm. It catalyses the reaction UDP-N-acetyl-alpha-D-muramoyl-L-alanine + D-glutamate + ATP = UDP-N-acetyl-alpha-D-muramoyl-L-alanyl-D-glutamate + ADP + phosphate + H(+). It functions in the pathway cell wall biogenesis; peptidoglycan biosynthesis. In terms of biological role, cell wall formation. Catalyzes the addition of glutamate to the nucleotide precursor UDP-N-acetylmuramoyl-L-alanine (UMA). In Pseudoalteromonas translucida (strain TAC 125), this protein is UDP-N-acetylmuramoylalanine--D-glutamate ligase.